Here is a 459-residue protein sequence, read N- to C-terminus: Uterine milk protein (459 aa).

The signal sequence occupies residues methionine 1–cysteine 25. The N-linked (GlcNAc...) asparagine glycan is linked to asparagine 268.

This sequence belongs to the serpin family. UTMP subfamily.

The protein is Uterine milk protein of Bos taurus (Bovine).